A 718-amino-acid polypeptide reads, in one-letter code: Protein Smaug homolog 1 (718 aa).

Ser168 is subject to Phosphoserine. Positions 278 to 310 (ARGPQCLPSDHAPLSPQSSVASSGSGGSEHLED) are disordered. Positions 323-396 (SGMKDVPAWL…LKSLERDIIE (74 aa)) constitute an SAM domain. Disordered stretches follow at residues 417 to 474 (AYGS…LQPH) and 572 to 601 (NRGF…QYQI). Residue Ser420 is modified to Phosphoserine. Thr424 bears the Phosphothreonine mark. Positions 453-466 (GATATGATATPSAG) are enriched in low complexity. Residue Arg573 is modified to Omega-N-methylarginine. The residue at position 580 (Ser580) is a Phosphoserine.

It belongs to the SMAUG family.

Its subcellular location is the cytoplasm. The protein resides in the cell projection. It is found in the dendrite. It localises to the synapse. The protein localises to the synaptosome. In terms of biological role, acts as a translational repressor of SRE-containing messengers. This is Protein Smaug homolog 1 (SAMD4A) from Macaca fascicularis (Crab-eating macaque).